The primary structure comprises 278 residues: Dermonecrotic toxin LlSicTox-alphaIII3ii (278 aa).

His-5 is an active-site residue. Mg(2+)-binding residues include Glu-25 and Asp-27. His-40 serves as the catalytic Nucleophile. Cys-44 and Cys-50 form a disulfide bridge. Residue Asp-84 participates in Mg(2+) binding.

Belongs to the arthropod phospholipase D family. Class I subfamily. Mg(2+) serves as cofactor. Expressed by the venom gland.

It localises to the secreted. It carries out the reaction an N-(acyl)-sphingosylphosphocholine = an N-(acyl)-sphingosyl-1,3-cyclic phosphate + choline. The enzyme catalyses an N-(acyl)-sphingosylphosphoethanolamine = an N-(acyl)-sphingosyl-1,3-cyclic phosphate + ethanolamine. The catalysed reaction is a 1-acyl-sn-glycero-3-phosphocholine = a 1-acyl-sn-glycero-2,3-cyclic phosphate + choline. It catalyses the reaction a 1-acyl-sn-glycero-3-phosphoethanolamine = a 1-acyl-sn-glycero-2,3-cyclic phosphate + ethanolamine. Dermonecrotic toxins cleave the phosphodiester linkage between the phosphate and headgroup of certain phospholipids (sphingolipid and lysolipid substrates), forming an alcohol (often choline) and a cyclic phosphate. This toxin acts on sphingomyelin (SM). It may also act on ceramide phosphoethanolamine (CPE), lysophosphatidylcholine (LPC) and lysophosphatidylethanolamine (LPE), but not on lysophosphatidylserine (LPS), and lysophosphatidylglycerol (LPG). It acts by transphosphatidylation, releasing exclusively cyclic phosphate products as second products. Induces dermonecrosis, hemolysis, increased vascular permeability, edema, inflammatory response, and platelet aggregation. The sequence is that of Dermonecrotic toxin LlSicTox-alphaIII3ii from Loxosceles laeta (South American recluse spider).